The chain runs to 882 residues: Cutinase transcription factor 1 beta (882 aa).

The span at 1–20 shows a compositional bias: low complexity; it reads MNAETPEGSAAPPSPASTSA. A disordered region spans residues 1-49; it reads MNAETPEGSAAPPSPASTSAKTVTDKTNKKRASPSGDSEQPTKVTKRRA. Positions 53–81 form a DNA-binding region, zn(2)-C6 fungal-type; sequence CVSCRARKVRCDVVEGAPCGNCRWDNVEC. The interval 117-148 is disordered; the sequence is NPMGMSTADLRRPSSGSAISTSSIDGPSSFLS. Residues 130–139 show a composition bias toward low complexity; sequence SSGSAISTSS.

Its subcellular location is the nucleus. In Fusarium vanettenii (Neocosmospora pisi), this protein is Cutinase transcription factor 1 beta (CTF1-BETA).